Consider the following 629-residue polypeptide: Polyadenylate-binding protein 2 (629 aa).

Over residues Met1–Asn12 the composition is skewed to polar residues. The tract at residues Met1–Ser25 is disordered. Over residues Gly13 to Ser25 the composition is skewed to low complexity. RRM domains lie at Thr36 to Arg114, Gly124 to Arg201, Thr215 to Lys292, and Ser318 to Arg395. The disordered stretch occupies residues Pro480–Gln507. Residues Gly492–Gln507 are compositionally biased toward low complexity. The 78-residue stretch at Thr539–Ala616 folds into the PABC domain.

Belongs to the polyadenylate-binding protein type-1 family. Interacts with eIF-iso4G. Interacts with ERD15/CID1 and CID7. Interacts with Turnip mosaic virus (TuMV) VPg-Pro and RNA-dependent RNA polymerase (RdRp). As to expression, expressed in all organs (at the protein level) but under distinct spatial and temporal regulation within each organ.

Its subcellular location is the cytoplasm. It localises to the nucleus. In terms of biological role, binds the poly(A) tail of mRNA. Appears to be an important mediator of the multiple roles of the poly(A) tail in mRNA biogenesis, stability and translation. In the cytoplasm, affects both translation and mRNA decay. Stimulates translation by interaction with translation initiation factor eIF4G, a subunit of the cap-binding complex eIF4F, bringing the 5'- and 3'-ends of the mRNA in proximity. The formation of this circular mRNP structure appears to be critical for the synergistic effects of the cap and the poly(A) tail in facilitating translation initiation, recycling of ribosomes, and mRNA stability. During infection with potyvirus TuMV, acts as a potential integral component of the viral replicase complex that could play an important role in the regulation of potyviral RNA-dependent RNA polymerase (RdRp). Binds to uridylated mRNAs and determines the size of uridine extensions. Limits uridine extension by URT1, likely by binding to the oligo(A) tail and preventing URT1 access. This is Polyadenylate-binding protein 2 (PAB2) from Arabidopsis thaliana (Mouse-ear cress).